The primary structure comprises 933 residues: Progesterone receptor (933 aa).

The segment at 1-164 is AF3; mediates transcriptional activation; it reads MTELKAKGPR…PATQRVLSPL (164 aa). Residues 1–256 form a disordered region; sequence MTELKAKGPR…AAAGGGAAAV (256 aa). Residues 1-566 are modulating, Pro-Rich; it reads MTELKAKGPR…YSFESLPQKI (566 aa). The residue at position 20 (S20) is a Phosphoserine. 2 short sequence motifs (LXXL motif) span residues 55 to 59 and 115 to 119; these read LDGLL and LDTLL. S130 and S162 each carry phosphoserine. The segment at 165-305 is mediates transcriptional transrepression; that stretch reads MSRSGGKAGD…LATTTMDFIH (141 aa). A Nuclear localization signal motif is present at residues 183 to 187; sequence KVLPR. 2 positions are modified to phosphoserine: S190 and S213. Residues 220–231 show a composition bias toward acidic residues; that stretch reads EVEEEDGSESED. S294 is subject to Phosphoserine; by MAPK1. A disordered region spans residues 332–380; the sequence is GAGAASAFAPPRSSPSASSTPVAVGDFPDCAYPPDADPKDDAYPLYGDF. Low complexity predominate over residues 335-350; it reads AASAFAPPRSSPSASS. Phosphoserine; by MAPK is present on S345. Residue K388 forms a Glycyl lysine isopeptide (Lys-Gly) (interchain with G-Cter in SUMO); alternate linkage. Residue K388 forms a Glycyl lysine isopeptide (Lys-Gly) (interchain with G-Cter in ubiquitin); alternate linkage. At S400 the chain carries Phosphoserine; by CDK2. A disordered region spans residues 415–454; the sequence is PDFPLGPPPPLPPRAPPSRPGEAAVTAAPASASVSSSSSS. Positions 418–433 are enriched in pro residues; sequence PLGPPPPLPPRAPPSR. Residues 434–454 show a composition bias toward low complexity; that stretch reads PGEAAVTAAPASASVSSSSSS. The AF1; mediates transcriptional activation stretch occupies residues 456 to 546; that stretch reads STLECILYKA…VYPPYLNYLR (91 aa). K531 is covalently cross-linked (Glycyl lysine isopeptide (Lys-Gly) (interchain with G-Cter in SUMO)). NR C4-type zinc fingers lie at residues 567–587 and 603–627; these read CLIC…CGSC and CAGR…LRKC. The nuclear receptor DNA-binding region spans 567–639; it reads CLICGDEASG…AGMVLGGRKF (73 aa). Position 676 is a phosphoserine (S676). An NR LBD domain is found at 679-913; sequence QDIQFFPPLI…EFPEMMSEVI (235 aa). The segment at 687–933 is AF2; mediates transcriptional activation; the sequence is LINLLVSIEP…MVKPLLFHKK (247 aa). R766 contributes to the progesterone binding site.

Belongs to the nuclear hormone receptor family. As to quaternary structure, interacts with SMARD1 and UNC45A. Interacts with CUEDC2; the interaction promotes ubiquitination, decreases sumoylation, and represses transcriptional activity. Interacts with PIAS3; the interaction promotes sumoylation of PR in a hormone-dependent manner, inhibits DNA-binding, and alters nuclear export. Interacts with SP1; the interaction requires ligand-induced phosphorylation on Ser-345 by ERK1/2-MAPK. Interacts with PRMT2. Interacts with NCOA2 and NCOA1. Interacts with KLF9. Interacts with GTF2B. In terms of processing, phosphorylated on multiple serine sites. Several of these sites are hormone-dependent. Phosphorylation on Ser-294 is highly hormone-dependent and modulates ubiquitination and sumoylation on Lys-388. Phosphorylation on Ser-345 also requires induction by hormone. Basal phosphorylation on Ser-162, Ser-190 and Ser-400 is increased in response to progesterone and can be phosphorylated in vitro by the CDK2-A1 complex. Increased levels of phosphorylation on Ser-400 also in the presence of EGF, heregulin, IGF, PMA and FBS. Phosphorylation at this site by CDK2 is ligand-independent, and increases nuclear translocation and transcriptional activity. Phosphorylation at Ser-162 and Ser-294, but not at Ser-190, is impaired during the G(2)/M phase of the cell cycle. Phosphorylation on Ser-345 by ERK1/2 MAPK is required for interaction with SP1. Sumoylation is hormone-dependent and represses transcriptional activity. Sumoylation on all three sites is enhanced by PIAS3. Desumoylated by SENP1. Sumoylation on Lys-388, the main site of sumoylation, is repressed by ubiquitination on the same site, and modulated by phosphorylation at Ser-294. Post-translationally, ubiquitination is hormone-dependent and represses sumoylation on the same site. Promoted by MAPK-mediated phosphorylation on Ser-294. Ubiquitinated by UBR5, leading to its degradation: UBR5 specifically recognizes and binds ligand-bound PGR when it is not associated with coactivators (NCOAs). In presence of NCOAs, the UBR5-degron is not accessible, preventing its ubiquitination and degradation. In terms of processing, palmitoylated by ZDHHC7 and ZDHHC21. Palmitoylation is required for plasma membrane targeting and for rapid intracellular signaling via ERK and AKT kinases and cAMP generation.

It localises to the nucleus. The protein localises to the cytoplasm. In terms of biological role, the steroid hormones and their receptors are involved in the regulation of eukaryotic gene expression and affect cellular proliferation and differentiation in target tissues. Transcriptional activator of several progesteron-dependent promoters in a variety of cell types. Involved in activation of SRC-dependent MAPK signaling on hormone stimulation. This chain is Progesterone receptor (PGR), found in Chlorocebus aethiops (Green monkey).